A 619-amino-acid chain; its full sequence is Eukaryotic translation initiation factor 3 subunit D (619 aa).

Positions 99 to 160 (QKQPHQRGRF…KWGARPPPKI (62 aa)) are disordered. The segment covering 100-121 (KQPHQRGRFRGNLRNQRGRGRG) has biased composition (basic residues). Residues 288–302 (EFDLLTVNETAIEPP) form an RNA gate region. A disordered region spans residues 588–619 (TPAATETVATATTEATTPTTATKTTAPAAAQK).

It belongs to the eIF-3 subunit D family. In terms of assembly, component of the eukaryotic translation initiation factor 3 (eIF-3) complex.

It localises to the cytoplasm. MRNA cap-binding component of the eukaryotic translation initiation factor 3 (eIF-3) complex, which is involved in protein synthesis of a specialized repertoire of mRNAs and, together with other initiation factors, stimulates binding of mRNA and methionyl-tRNAi to the 40S ribosome. The eIF-3 complex specifically targets and initiates translation of a subset of mRNAs involved in cell proliferation. In the eIF-3 complex, eif3d specifically recognizes and binds the 7-methylguanosine cap of a subset of mRNAs. The chain is Eukaryotic translation initiation factor 3 subunit D from Aedes aegypti (Yellowfever mosquito).